We begin with the raw amino-acid sequence, 133 residues long: Small ribosomal subunit protein uS8 (133 aa).

The protein belongs to the universal ribosomal protein uS8 family. As to quaternary structure, part of the 30S ribosomal subunit. Contacts proteins S5 and S12.

In terms of biological role, one of the primary rRNA binding proteins, it binds directly to 16S rRNA central domain where it helps coordinate assembly of the platform of the 30S subunit. This Prochlorococcus marinus (strain MIT 9301) protein is Small ribosomal subunit protein uS8.